The primary structure comprises 208 residues: Outer-membrane lipoprotein carrier protein (208 aa).

The signal sequence occupies residues 1 to 22; it reads MRKTLTALMLSLPLLTPHMAFA.

This sequence belongs to the LolA family. Monomer.

The protein resides in the periplasm. In terms of biological role, participates in the translocation of lipoproteins from the inner membrane to the outer membrane. Only forms a complex with a lipoprotein if the residue after the N-terminal Cys is not an aspartate (The Asp acts as a targeting signal to indicate that the lipoprotein should stay in the inner membrane). This Shewanella woodyi (strain ATCC 51908 / MS32) protein is Outer-membrane lipoprotein carrier protein.